We begin with the raw amino-acid sequence, 73 residues long: Sec-independent protein translocase protein TatA (73 aa).

Residues 1-21 (MFGLGAPELILILILALIIFG) traverse the membrane as a helical segment. The segment at 52 to 73 (EAAKIDDGNNNSDKEKATRQAS) is disordered.

Belongs to the TatA/E family. In terms of assembly, forms a complex with TatC.

The protein resides in the cell membrane. Its function is as follows. Part of the twin-arginine translocation (Tat) system that transports large folded proteins containing a characteristic twin-arginine motif in their signal peptide across membranes. TatA could form the protein-conducting channel of the Tat system. The polypeptide is Sec-independent protein translocase protein TatA (Moorella thermoacetica (strain ATCC 39073 / JCM 9320)).